The primary structure comprises 863 residues: DNA mismatch repair protein MutS (863 aa).

607-614 provides a ligand contact to ATP; that stretch reads GPNMAGKS.

It belongs to the DNA mismatch repair MutS family.

Its function is as follows. This protein is involved in the repair of mismatches in DNA. It is possible that it carries out the mismatch recognition step. This protein has a weak ATPase activity. The sequence is that of DNA mismatch repair protein MutS from Caldicellulosiruptor saccharolyticus (strain ATCC 43494 / DSM 8903 / Tp8T 6331).